Here is a 191-residue protein sequence, read N- to C-terminus: General negative regulator of transcription subunit 2 (191 aa).

This sequence belongs to the CNOT2/3/5 family. Forms a NOT protein complex that comprises NOT1, NOT2, NOT3, NOT4 and NOT5. Subunit of the 1.0 MDa CCR4-NOT core complex that contains CCR4, CAF1, NOT1, NOT2, NOT3, NOT4, NOT5, CAF40 and CAF130. In the complex interacts with NOT1 and NOT5. The core complex probably is part of a less characterized 1.9 MDa CCR4-NOT complex.

It is found in the cytoplasm. Its subcellular location is the nucleus. Acts as a component of the CCR4-NOT core complex, which in the nucleus seems to be a general transcription factor, and in the cytoplasm the major mRNA deadenylase involved in mRNA turnover. NOT2 is required for the integrity of the complex. The NOT protein subcomplex negatively regulates the basal and activated transcription of many genes. Preferentially affects TC-type TATA element-dependent transcription. Could directly or indirectly inhibit component(s) of the general transcription machinery. The polypeptide is General negative regulator of transcription subunit 2 (CDC36) (Saccharomyces cerevisiae (strain ATCC 204508 / S288c) (Baker's yeast)).